Reading from the N-terminus, the 370-residue chain is DNA-directed RNA polymerase II subunit GRINL1A (370 aa).

The disordered stretch occupies residues 1-20 (MSSLPRGFEPQTPEDLGQRS). The stretch at 15-69 (DLGQRSLAELREMLKRQERLLRNVKFICKLPDKGKKISDAVTKLKAAIAEREEVR) forms a coiled coil. Residues 29-68 (KRQERLLRNVKFICKLPDKGKKISDAVTKLKAAIAEREEV) are important for transcription repressor activity. 3 disordered regions span residues 93-172 (DGDR…ASEG), 204-226 (DPTE…WSGP), and 241-283 (KNPM…RRDR). The segment covering 101–131 (NSDQILDTSSPVPGCSSVANITSSQTTSRQQ) has biased composition (polar residues). Positions 138–152 (RGGDAEAAEAEHTVS) are enriched in basic and acidic residues. A compositionally biased stretch (low complexity) spans 155 to 170 (PTSSSGAPAPSSSQAS). The span at 205–214 (PTEHHSEGNR) shows a compositional bias: basic and acidic residues. The interaction with Pol II stretch occupies residues 228-299 (KKPHYMEVLE…TAARLLPLHH (72 aa)). Polar residues predominate over residues 254-266 (VLPSQPRDSSSAC). S271 bears the Phosphoserine mark. Residues 300–315 (LPTQLLSIEESLALQR) form an important for transcription repressor activity region. Positions 303–328 (QLLSIEESLALQRQQKQSYEEIQAKL) form a coiled coil. The interval 316 to 341 (QQKQSYEEIQAKLAAQKLAERLNIKM) is interaction with Pol II. The disordered stretch occupies residues 340–370 (KMQSYNPEGESSRKYREVRDEDDDQSSEDEF). Positions 349-358 (ESSRKYREVR) are enriched in basic and acidic residues. The segment covering 359-370 (DEDDDQSSEDEF) has biased composition (acidic residues).

The protein belongs to the GRINL1 family. As to quaternary structure, component of the Pol II(G) complex, which contains the RNA polymerase II (Pol II) core complex subunits and POLR2M and appears to be an abundant form of Pol II. Dephosphorylated at Ser-271 by the PNUTS-PP1 complex, promoting RNA polymerase II transcription pause-release.

It is found in the nucleus. In terms of biological role, appears to be a stable component of the Pol II(G) complex form of RNA polymerase II (Pol II). Pol II synthesizes mRNA precursors and many functional non-coding RNAs and is the central component of the basal RNA polymerase II transcription machinery. May play a role in Mediator complex-dependent regulation of transcription activation. Acts in vitro as a negative regulator of transcriptional activation; this repression is relieved by the Mediator complex, which restores Pol II(G) activator-dependent transcription to a level equivalent to that of Pol II. The protein is DNA-directed RNA polymerase II subunit GRINL1A (POLR2M) of Bos taurus (Bovine).